We begin with the raw amino-acid sequence, 596 residues long: uncharacterized protein (596 aa).

One can recognise a Helicase ATP-binding domain in the interval lysine 44–aspartate 203. One can recognise a Helicase C-terminal domain in the interval arginine 285 to leucine 432. Disordered regions lie at residues leucine 420–glutamine 444 and glutamate 506–glycine 533. Residues lysine 510 to arginine 523 are compositionally biased toward polar residues.

It to M.tuberculosis Rv2917.

This is an uncharacterized protein from Mycobacterium leprae (strain TN).